A 635-amino-acid chain; its full sequence is Sulfite reductase [ferredoxin], chloroplastic (635 aa).

Residues 1 to 50 constitute a chloroplast transit peptide; sequence MSGAIGGAEVHGFRGAAAQLPRSRVLGRPIRVAPPAAARPGGASAGSIRA. Disordered stretches follow at residues 31 to 50 and 245 to 267; these read RVAP…SIRA and PEVT…PEPI. A compositionally biased stretch (basic and acidic residues) spans 245–254; the sequence is PEVTKARNDN. [4Fe-4S] cluster-binding residues include Cys494, Cys500, Cys540, and Cys544. Cys544 serves as a coordination point for siroheme.

Belongs to the nitrite and sulfite reductase 4Fe-4S domain family. In terms of assembly, monomer. Interacts with ferredoxin. It depends on siroheme as a cofactor. [4Fe-4S] cluster serves as cofactor. Phosphorylated; this phosphorylation reduces DNA-binding. In terms of tissue distribution, present in roots and leaves (at protein level). In leaves, sulfite reductase activity is detected in both bundle sheath and mesophyll cell types.

It localises to the plastid. The protein localises to the chloroplast stroma. It is found in the chloroplast nucleoid. Its subcellular location is the plastid stroma. It carries out the reaction hydrogen sulfide + 6 oxidized [2Fe-2S]-[ferredoxin] + 3 H2O = sulfite + 6 reduced [2Fe-2S]-[ferredoxin] + 7 H(+). Inhibited by the tryptophan-modifying reagent, N-bromosuccinimide (NBS), by the lysine-modifying reagent, N-acetylsuccinimide and by the arginine-modifying reagent, phenylglyoxal. Complex formation with ferredoxin prevents these inhibitions. Essential protein with sulfite reductase activity required in assimilatory sulfate reduction pathway during both primary and secondary metabolism and thus involved in development and growth. Its function is as follows. DNA-binding protein that binds to both double-stranded and single-stranded DNA without significant sequence specificity to reversibly repress the transcriptional activity of chloroplast nucleoids by promoting DNA compaction and possibly regulate DNA replication. The polypeptide is Sulfite reductase [ferredoxin], chloroplastic (SIR) (Zea mays (Maize)).